Consider the following 127-residue polypeptide: Small ribosomal subunit protein uS11 (127 aa).

It belongs to the universal ribosomal protein uS11 family. As to quaternary structure, part of the 30S ribosomal subunit.

In terms of biological role, located on the platform of the 30S subunit. The sequence is that of Small ribosomal subunit protein uS11 from Halobacterium salinarum (strain ATCC 700922 / JCM 11081 / NRC-1) (Halobacterium halobium).